Reading from the N-terminus, the 498-residue chain is UDP-N-acetylmuramate--L-alanine ligase (498 aa).

133–139 contributes to the ATP binding site; that stretch reads GSSGKTT.

This sequence belongs to the MurCDEF family.

It localises to the cytoplasm. The catalysed reaction is UDP-N-acetyl-alpha-D-muramate + L-alanine + ATP = UDP-N-acetyl-alpha-D-muramoyl-L-alanine + ADP + phosphate + H(+). Its pathway is cell wall biogenesis; peptidoglycan biosynthesis. Its function is as follows. Cell wall formation. This is UDP-N-acetylmuramate--L-alanine ligase from Wolbachia pipientis wMel.